We begin with the raw amino-acid sequence, 200 residues long: Small ribosomal subunit protein uS4 (200 aa).

Positions 20–41 are disordered; the sequence is TGTGKELDKRPYAPGQHGPNQR. The 61-residue stretch at 92 to 152 folds into the S4 RNA-binding domain; it reads SRLDNLVYRL…EKSKNLDVVK (61 aa).

Belongs to the universal ribosomal protein uS4 family. Part of the 30S ribosomal subunit. Contacts protein S5. The interaction surface between S4 and S5 is involved in control of translational fidelity.

One of the primary rRNA binding proteins, it binds directly to 16S rRNA where it nucleates assembly of the body of the 30S subunit. In terms of biological role, with S5 and S12 plays an important role in translational accuracy. The chain is Small ribosomal subunit protein uS4 from Oceanobacillus iheyensis (strain DSM 14371 / CIP 107618 / JCM 11309 / KCTC 3954 / HTE831).